A 184-amino-acid chain; its full sequence is Ribosome-recycling factor (184 aa).

The protein belongs to the RRF family.

Its subcellular location is the cytoplasm. Its function is as follows. Responsible for the release of ribosomes from messenger RNA at the termination of protein biosynthesis. May increase the efficiency of translation by recycling ribosomes from one round of translation to another. The sequence is that of Ribosome-recycling factor from Caldicellulosiruptor bescii (strain ATCC BAA-1888 / DSM 6725 / KCTC 15123 / Z-1320) (Anaerocellum thermophilum).